Here is a 290-residue protein sequence, read N- to C-terminus: Acetyl-coenzyme A carboxylase carboxyl transferase subunit beta (290 aa).

Residues 27 to 290 enclose the CoA carboxyltransferase N-terminal domain; that stretch reads LWHKCPSCEA…FTHSPSPVSA (264 aa). Zn(2+) contacts are provided by Cys-31, Cys-34, Cys-50, and Cys-53. The C4-type zinc-finger motif lies at 31–53; that stretch reads CPSCEAVLYRPELEKTLDVCPKC.

It belongs to the AccD/PCCB family. As to quaternary structure, acetyl-CoA carboxylase is a heterohexamer composed of biotin carboxyl carrier protein (AccB), biotin carboxylase (AccC) and two subunits each of ACCase subunit alpha (AccA) and ACCase subunit beta (AccD). It depends on Zn(2+) as a cofactor.

The protein resides in the cytoplasm. The enzyme catalyses N(6)-carboxybiotinyl-L-lysyl-[protein] + acetyl-CoA = N(6)-biotinyl-L-lysyl-[protein] + malonyl-CoA. It functions in the pathway lipid metabolism; malonyl-CoA biosynthesis; malonyl-CoA from acetyl-CoA: step 1/1. In terms of biological role, component of the acetyl coenzyme A carboxylase (ACC) complex. Biotin carboxylase (BC) catalyzes the carboxylation of biotin on its carrier protein (BCCP) and then the CO(2) group is transferred by the transcarboxylase to acetyl-CoA to form malonyl-CoA. This Pseudomonas paraeruginosa (strain DSM 24068 / PA7) (Pseudomonas aeruginosa (strain PA7)) protein is Acetyl-coenzyme A carboxylase carboxyl transferase subunit beta.